Consider the following 160-residue polypeptide: Transcription elongation factor GreB (160 aa).

Belongs to the GreA/GreB family. GreB subfamily.

Necessary for efficient RNA polymerase transcription elongation past template-encoded arresting sites. The arresting sites in DNA have the property of trapping a certain fraction of elongating RNA polymerases that pass through, resulting in locked ternary complexes. Cleavage of the nascent transcript by cleavage factors such as GreA or GreB allows the resumption of elongation from the new 3'terminus. GreB releases sequences of up to 9 nucleotides in length. This is Transcription elongation factor GreB from Vibrio vulnificus (strain CMCP6).